Reading from the N-terminus, the 245-residue chain is 1-(5-phosphoribosyl)-5-[(5-phosphoribosylamino)methylideneamino] imidazole-4-carboxamide isomerase (245 aa).

Asp7 acts as the Proton acceptor in catalysis. The active-site Proton donor is the Asp129.

It belongs to the HisA/HisF family.

The protein resides in the cytoplasm. The enzyme catalyses 1-(5-phospho-beta-D-ribosyl)-5-[(5-phospho-beta-D-ribosylamino)methylideneamino]imidazole-4-carboxamide = 5-[(5-phospho-1-deoxy-D-ribulos-1-ylimino)methylamino]-1-(5-phospho-beta-D-ribosyl)imidazole-4-carboxamide. It participates in amino-acid biosynthesis; L-histidine biosynthesis; L-histidine from 5-phospho-alpha-D-ribose 1-diphosphate: step 4/9. The chain is 1-(5-phosphoribosyl)-5-[(5-phosphoribosylamino)methylideneamino] imidazole-4-carboxamide isomerase from Edwardsiella ictaluri (strain 93-146).